The sequence spans 197 residues: Pyridoxal 5'-phosphate synthase subunit PdxT (197 aa).

53-55 provides a ligand contact to L-glutamine; it reads GES. Residue Cys85 is the Nucleophile of the active site. L-glutamine contacts are provided by residues Arg114 and 142-143; that span reads IR. Active-site charge relay system residues include His179 and Glu181.

Belongs to the glutaminase PdxT/SNO family. In terms of assembly, in the presence of PdxS, forms a dodecamer of heterodimers. Only shows activity in the heterodimer.

It carries out the reaction aldehydo-D-ribose 5-phosphate + D-glyceraldehyde 3-phosphate + L-glutamine = pyridoxal 5'-phosphate + L-glutamate + phosphate + 3 H2O + H(+). It catalyses the reaction L-glutamine + H2O = L-glutamate + NH4(+). Its pathway is cofactor biosynthesis; pyridoxal 5'-phosphate biosynthesis. Catalyzes the hydrolysis of glutamine to glutamate and ammonia as part of the biosynthesis of pyridoxal 5'-phosphate. The resulting ammonia molecule is channeled to the active site of PdxS. The protein is Pyridoxal 5'-phosphate synthase subunit PdxT of Thermococcus onnurineus (strain NA1).